A 200-amino-acid polypeptide reads, in one-letter code: Imidazoleglycerol-phosphate dehydratase (200 aa).

Residues E13, 39-47 (HMLTLLTFH), 68-72 (HHLIE), R94, and R116 each bind substrate. Positions 39, 68, 69, and 72 each coordinate Mn(2+). Positions 141, 165, 166, and 169 each coordinate Mn(2+). Substrate contacts are provided by residues 165-173 (HHIIEGMFK) and 195-197 (SSK).

This sequence belongs to the imidazoleglycerol-phosphate dehydratase family. Mn(2+) serves as cofactor.

Its subcellular location is the cytoplasm. It carries out the reaction D-erythro-1-(imidazol-4-yl)glycerol 3-phosphate = 3-(imidazol-4-yl)-2-oxopropyl phosphate + H2O. Its pathway is amino-acid biosynthesis; L-histidine biosynthesis; L-histidine from 5-phospho-alpha-D-ribose 1-diphosphate: step 6/9. The polypeptide is Imidazoleglycerol-phosphate dehydratase (hisB) (Lactococcus lactis subsp. lactis (strain IL1403) (Streptococcus lactis)).